The sequence spans 336 residues: Glyceraldehyde-3-phosphate dehydrogenase (336 aa).

NAD(+) contacts are provided by residues 12 to 13, aspartate 34, and serine 120; that span reads RI. Residues 150–152, threonine 181, arginine 198, 211–212, and arginine 234 each bind D-glyceraldehyde 3-phosphate; these read SCT and TG. Residue cysteine 151 is the Nucleophile of the active site. Asparagine 316 contributes to the NAD(+) binding site.

Belongs to the glyceraldehyde-3-phosphate dehydrogenase family. In terms of assembly, homotetramer.

Its subcellular location is the cytoplasm. It catalyses the reaction D-glyceraldehyde 3-phosphate + phosphate + NAD(+) = (2R)-3-phospho-glyceroyl phosphate + NADH + H(+). Its pathway is carbohydrate degradation; glycolysis; pyruvate from D-glyceraldehyde 3-phosphate: step 1/5. Catalyzes the oxidative phosphorylation of glyceraldehyde 3-phosphate (G3P) to 1,3-bisphosphoglycerate (BPG) using the cofactor NAD. The first reaction step involves the formation of a hemiacetal intermediate between G3P and a cysteine residue, and this hemiacetal intermediate is then oxidized to a thioester, with concomitant reduction of NAD to NADH. The reduced NADH is then exchanged with the second NAD, and the thioester is attacked by a nucleophilic inorganic phosphate to produce BPG. In Staphylococcus aureus, this protein is Glyceraldehyde-3-phosphate dehydrogenase (gapA).